We begin with the raw amino-acid sequence, 334 residues long: MITIGIETSCDETSVSLLEDGNKILSNLVSSQVEIHKTFGGVVPEVASRIHVEVLNRLIELALEKAKKEFTDIDLIAVTQGPGLIGALWIGIMAAKTLSLALNKPLIGVNHLEGHIFANFLGEDPPTFPFIALIVSGGHTEYILVEDIGVYKILGQTLDDAAGEAFDKVARILGLNYPGGPEIDKISKMGKPIFNFPKIKCDRELDISFSGIKTAVLYLVRDLKKEGKEIPVADIAASFQERVVEELLERAFLALNKFNIKTLVVSGGVASNSYLQRRFKEESRKEGIKLYIPPPYLCTDNGAMIACAGYHLYQKGYKSDLYLSANPDLLLGER.

2 residues coordinate Fe cation: H111 and H115. Residues 134–138 (IVSGG), D167, G180, D184, and N272 each bind substrate. D300 is a Fe cation binding site.

This sequence belongs to the KAE1 / TsaD family. It depends on Fe(2+) as a cofactor.

The protein resides in the cytoplasm. It catalyses the reaction L-threonylcarbamoyladenylate + adenosine(37) in tRNA = N(6)-L-threonylcarbamoyladenosine(37) in tRNA + AMP + H(+). Functionally, required for the formation of a threonylcarbamoyl group on adenosine at position 37 (t(6)A37) in tRNAs that read codons beginning with adenine. Is involved in the transfer of the threonylcarbamoyl moiety of threonylcarbamoyl-AMP (TC-AMP) to the N6 group of A37, together with TsaE and TsaB. TsaD likely plays a direct catalytic role in this reaction. This Dictyoglomus turgidum (strain DSM 6724 / Z-1310) protein is tRNA N6-adenosine threonylcarbamoyltransferase.